A 441-amino-acid polypeptide reads, in one-letter code: Serine carboxypeptidase-like 4 (441 aa).

The N-terminal stretch at 1 to 29 (MANNNVYSVLKSLLLLLHLVFLSKQHVDS) is a signal peptide. Disulfide bonds link cysteine 88–cysteine 331, cysteine 252–cysteine 266, and cysteine 290–cysteine 297. Asparagine 109 carries an N-linked (GlcNAc...) asparagine glycan. The active site involves serine 184. Residue asparagine 350 is glycosylated (N-linked (GlcNAc...) asparagine). Aspartate 366 is an active-site residue. A glycan (N-linked (GlcNAc...) asparagine) is linked at asparagine 382. Residue histidine 419 is part of the active site.

It belongs to the peptidase S10 family. Ubiquitous.

It localises to the secreted. Functionally, probable carboxypeptidase. The chain is Serine carboxypeptidase-like 4 (SCPL4) from Arabidopsis thaliana (Mouse-ear cress).